We begin with the raw amino-acid sequence, 124 residues long: Large ribosomal subunit protein bL19 (124 aa).

This sequence belongs to the bacterial ribosomal protein bL19 family.

This protein is located at the 30S-50S ribosomal subunit interface and may play a role in the structure and function of the aminoacyl-tRNA binding site. The sequence is that of Large ribosomal subunit protein bL19 from Zymomonas mobilis subsp. mobilis (strain ATCC 31821 / ZM4 / CP4).